We begin with the raw amino-acid sequence, 336 residues long: Cell division protein ZipA (336 aa).

At 1 to 6 the chain is on the periplasmic side; sequence MMQDLR. Residues 7-27 traverse the membrane as a helical segment; that stretch reads LILIVVGAIAIIALLLHGLWT. At 28–336 the chain is on the cytoplasmic side; it reads SRKERSSLFR…RIRDVLKANA (309 aa). Over residues 40–51 the composition is skewed to basic and acidic residues; it reads PVKRAKKARDET. Residues 40–190 form a disordered region; it reads PVKRAKKARD…APAQPQQPAE (151 aa). The span at 76–89 shows a compositional bias: low complexity; the sequence is SFSSSSFDNASFDN. Residues 126 to 138 show a composition bias toward polar residues; it reads PRSQVRGDSNPQV. The span at 179-190 shows a compositional bias: low complexity; that stretch reads QPAPAQPQQPAE.

It belongs to the ZipA family. As to quaternary structure, interacts with FtsZ via their C-terminal domains.

The protein resides in the cell inner membrane. Essential cell division protein that stabilizes the FtsZ protofilaments by cross-linking them and that serves as a cytoplasmic membrane anchor for the Z ring. Also required for the recruitment to the septal ring of downstream cell division proteins. The chain is Cell division protein ZipA from Pectobacterium carotovorum subsp. carotovorum (strain PC1).